The sequence spans 366 residues: D-alanine--D-alanine ligase A (366 aa).

The ATP-grasp domain occupies 145–348 (KRLLRDAGLK…YRELITALIE (204 aa)). 175–230 (VEQLGLPLFVKPANQGSSVGVSKVKREADLRAALDEAFRYDHKVLVEQAVIGREIE) serves as a coordination point for ATP. Positions 302, 315, and 317 each coordinate Mg(2+).

This sequence belongs to the D-alanine--D-alanine ligase family. Mg(2+) serves as cofactor. The cofactor is Mn(2+).

Its subcellular location is the cytoplasm. It carries out the reaction 2 D-alanine + ATP = D-alanyl-D-alanine + ADP + phosphate + H(+). It functions in the pathway cell wall biogenesis; peptidoglycan biosynthesis. Its function is as follows. Cell wall formation. This chain is D-alanine--D-alanine ligase A, found in Chromobacterium violaceum (strain ATCC 12472 / DSM 30191 / JCM 1249 / CCUG 213 / NBRC 12614 / NCIMB 9131 / NCTC 9757 / MK).